Consider the following 354-residue polypeptide: MNKNKRLLVMAGGTGGHVFPGLAVAKKLQQEGWEIRWLGTADRMEADLVPKHGIEIDFIKVKGLRGQGIIRMLAAPFKIVGAILQARKYIKAWQPDVVLGMGGYVSGPGGIAAWLSGVPVVLHEQNAVAGLTNQWLSRIAAKVLQAFPGAFANKDVVGNPVRQDVTALASPQERFAGRQGPVRILVMGGSQGARILNQTLPEVAGLLGDKVTIWHQAGKGSLQVTEQAYAKSTNVPHKVTEFIDDVAAAYAWADVVVCRSGALTVSELSAAGVGAIFVPFMHKDRQQALNADHLVQCGAAKMIEQMDLTAAGLAEELNQLDREVLKQMAVAAREAAIVDADVRVADVIKSLARK.

Residues 14-16, Asn-126, Arg-162, Ser-190, Ile-243, 262-267, and Gln-287 contribute to the UDP-N-acetyl-alpha-D-glucosamine site; these read TGG and ALTVSE.

The protein belongs to the glycosyltransferase 28 family. MurG subfamily.

It localises to the cell inner membrane. The catalysed reaction is di-trans,octa-cis-undecaprenyl diphospho-N-acetyl-alpha-D-muramoyl-L-alanyl-D-glutamyl-meso-2,6-diaminopimeloyl-D-alanyl-D-alanine + UDP-N-acetyl-alpha-D-glucosamine = di-trans,octa-cis-undecaprenyl diphospho-[N-acetyl-alpha-D-glucosaminyl-(1-&gt;4)]-N-acetyl-alpha-D-muramoyl-L-alanyl-D-glutamyl-meso-2,6-diaminopimeloyl-D-alanyl-D-alanine + UDP + H(+). It functions in the pathway cell wall biogenesis; peptidoglycan biosynthesis. Functionally, cell wall formation. Catalyzes the transfer of a GlcNAc subunit on undecaprenyl-pyrophosphoryl-MurNAc-pentapeptide (lipid intermediate I) to form undecaprenyl-pyrophosphoryl-MurNAc-(pentapeptide)GlcNAc (lipid intermediate II). The protein is UDP-N-acetylglucosamine--N-acetylmuramyl-(pentapeptide) pyrophosphoryl-undecaprenol N-acetylglucosamine transferase of Photobacterium profundum (strain SS9).